The following is a 411-amino-acid chain: Dihydrosphingosine 1-phosphate phosphatase C823.11 (411 aa).

Residues 1–74 (MVHKKKNVDI…LDVYFMYTAT (74 aa)) lie on the Lumenal side of the membrane. Residues 75-95 (LGTHVFFMLALPIFFWSGCIY) traverse the membrane as a helical segment. Residues 96–99 (YTLD) are Cytoplasmic-facing. The chain crosses the membrane as a helical span at residues 100–120 (ITQLFAAGVYFSGCIKDYFCL). The phosphatase sequence motif I stretch occupies residues 115-123 (KDYFCLPRP). The Lumenal portion of the chain corresponds to 121-170 (PRPRSPPMVRLTLSSDAEYEYGFPSTHTTNAMATGFYSLFLLLSMSDSMS). The phosphatase sequence motif II stretch occupies residues 144–147 (PSTH). The active-site Proton donor is the histidine 147. The helical transmembrane segment at 171–191 (SISYYFLLSLVLLYIASISLG) threads the bilayer. Positions 191-202 (GRIYCGMHGFMD) are phosphatase sequence motif III. The Cytoplasmic portion of the chain corresponds to 192–195 (RIYC). Residues 196-216 (GMHGFMDVSTGTILGVTLAIF) form a helical membrane-spanning segment. The active-site Nucleophile is the histidine 198. Residues 217-233 (QWKYADFFHNVWSSSST) lie on the Lumenal side of the membrane. The chain crosses the membrane as a helical span at residues 234–254 (SVPILSVVLALFFIWFHPQPA). Residues 255-259 (ERCIC) are Cytoplasmic-facing. Residues 260–280 (LEDSISFISVIMGIDLGTWFA) form a helical membrane-spanning segment. At 281–293 (SPESLSHLHDNLN) the chain is on the lumenal side. Residues 294-314 (SYFLLKFFVRVLFGVCMILIW) traverse the membrane as a helical segment. The Cytoplasmic segment spans residues 315–387 (KSFAKQALLA…VRFDIETIAR (73 aa)). Residues 388-408 (IIVYSGIGFLCTYFAPKVFLK) traverse the membrane as a helical segment. Topologically, residues 409-411 (WKI) are lumenal.

This sequence belongs to the type 2 lipid phosphate phosphatase family.

It is found in the endoplasmic reticulum membrane. Functionally, dihydrosphingosine 1-phosphate phosphatase required for efficient ceramide synthesis from exogenous sphingoid bases. Involved in endocytosis and calcium-mediated signaling. This chain is Dihydrosphingosine 1-phosphate phosphatase C823.11, found in Schizosaccharomyces pombe (strain 972 / ATCC 24843) (Fission yeast).